The primary structure comprises 200 residues: Male-specific histamine-binding salivary protein (200 aa).

A signal peptide spans 1–18 (MKVLLLVLGAALCQNADA). Residues Ser-37, Asp-41, Asp-56, and Trp-59 each coordinate histamine. 2 cysteine pairs are disulfide-bonded: Cys-65–Cys-193 and Cys-137–Cys-169. Asn-79 is a glycosylation site (N-linked (GlcNAc...) asparagine). Histamine-binding residues include Glu-97, Tyr-115, Phe-125, Asp-138, Glu-154, and Trp-156.

Belongs to the calycin superfamily. Histamine-binding salivary protein family. As to quaternary structure, homodimer; disulcde-linked. Post-translationally, N-glycosylated. As to expression, expressed in salivary glands.

Its subcellular location is the secreted. Its function is as follows. Salivary tick protein that acts by scavenging histamine at the wound site, outcompeting histamine receptors for histamine, thereby overcoming host inflammatory responses. Binds histamine with a high-affinity (Kd=1.2 nM). Contains two binding histamine sites (H and L), that appear to bind histamine with differing affinities. This Rhipicephalus appendiculatus (Brown ear tick) protein is Male-specific histamine-binding salivary protein.